The primary structure comprises 483 residues: tRNA-2-methylthio-N(6)-dimethylallyladenosine synthase (483 aa).

In terms of domain architecture, MTTase N-terminal spans 31 to 148 (KKLYIETQGC…LPQMLDQHHA (118 aa)). [4Fe-4S] cluster contacts are provided by Cys-40, Cys-77, Cys-111, Cys-192, Cys-196, and Cys-199. Residues 178–410 (RVEGFKAFVS…QQVIKQSSIE (233 aa)) enclose the Radical SAM core domain. A TRAM domain is found at 413-477 (DAMLGKIERV…LNLVYGELLN (65 aa)).

This sequence belongs to the methylthiotransferase family. MiaB subfamily. Monomer. Requires [4Fe-4S] cluster as cofactor.

It localises to the cytoplasm. The catalysed reaction is N(6)-dimethylallyladenosine(37) in tRNA + (sulfur carrier)-SH + AH2 + 2 S-adenosyl-L-methionine = 2-methylsulfanyl-N(6)-dimethylallyladenosine(37) in tRNA + (sulfur carrier)-H + 5'-deoxyadenosine + L-methionine + A + S-adenosyl-L-homocysteine + 2 H(+). Its function is as follows. Catalyzes the methylthiolation of N6-(dimethylallyl)adenosine (i(6)A), leading to the formation of 2-methylthio-N6-(dimethylallyl)adenosine (ms(2)i(6)A) at position 37 in tRNAs that read codons beginning with uridine. The protein is tRNA-2-methylthio-N(6)-dimethylallyladenosine synthase of Acinetobacter baumannii (strain ACICU).